We begin with the raw amino-acid sequence, 300 residues long: Pleckstrin homology domain-containing family A member 3 (300 aa).

Residues 1–93 (MEGVLYKWTN…WLVALGSSKA (93 aa)) form the PH domain. Positions 1 to 100 (MEGVLYKWTN…SKACLTDTRT (100 aa)) are interaction with SACM1L. Residues 97 to 300 (DTRTKKEKEI…SEDTLPSFSS (204 aa)) form an interaction with VAPA and VAPB region. The interval 197–300 (PVSPSPVQMM…SEDTLPSFSS (104 aa)) is disordered. A phosphoserine mark is found at serine 236 and serine 244. Residues 279-290 (EESRLMAKKQSE) show a composition bias toward basic and acidic residues.

In terms of assembly, interacts with GTP-bound ARF1. Interacts with SACM1L and VAPA and/or VAPB to form a ternary complex. In terms of tissue distribution, widely expressed.

Its subcellular location is the golgi apparatus. It is found in the trans-Golgi network membrane. Its function is as follows. Plays a role in regulation of vesicular cargo transport from the trans-Golgi network (TGN) to the plasma membrane. Regulates Golgi phosphatidylinositol 4-phosphate (PtdIns(4)P) levels and activates the PtdIns(4)P phosphatase activity of SACM1L when it binds PtdIns(4)P in 'trans' configuration. Binds preferentially to PtdIns(4)P. Negatively regulates APOB secretion from hepatocytes. This is Pleckstrin homology domain-containing family A member 3 (PLEKHA3) from Homo sapiens (Human).